We begin with the raw amino-acid sequence, 241 residues long: Uridylate kinase (241 aa).

Residue 12–15 (KISG) participates in ATP binding. The interval 20–25 (GEKGTG) is involved in allosteric activation by GTP. Position 54 (Gly54) interacts with UMP. Gly55 and Arg59 together coordinate ATP. Residues Asp74 and 135 to 142 (TGNPYFST) each bind UMP. Asn163, Tyr169, and Asp172 together coordinate ATP.

It belongs to the UMP kinase family. Homohexamer.

The protein resides in the cytoplasm. It carries out the reaction UMP + ATP = UDP + ADP. It participates in pyrimidine metabolism; CTP biosynthesis via de novo pathway; UDP from UMP (UMPK route): step 1/1. Its activity is regulated as follows. Allosterically activated by GTP. Inhibited by UTP. Functionally, catalyzes the reversible phosphorylation of UMP to UDP. This chain is Uridylate kinase, found in Lactobacillus delbrueckii subsp. bulgaricus (strain ATCC 11842 / DSM 20081 / BCRC 10696 / JCM 1002 / NBRC 13953 / NCIMB 11778 / NCTC 12712 / WDCM 00102 / Lb 14).